Consider the following 216-residue polypeptide: Inner membrane assembly complex subunit 22 (216 aa).

A mitochondrion-targeting transit peptide spans 1-26 (MFMARQVLRNGLFLRSLAPIKITART). The Mitochondrial matrix portion of the chain corresponds to 27–43 (VASANAGIKRKSRFDKT). Residues 44 to 63 (MIKPLLLVMIFGSILNAVIA) traverse the membrane as a helical segment. The stretch at 64-93 (EKRNIIDMERKYKLKLDKLKELIRRVHDNN) forms a coiled coil. The Mitochondrial intermembrane portion of the chain corresponds to 64–216 (EKRNIIDMER…KEHDKIPKFL (153 aa)).

As to quaternary structure, component of the inner membrane assembly (INA) complex, composed of INA17 and INA22. Interacts with a subset of F(1)F(0)-ATP synthase subunits of the F(1)-domain and the peripheral stalk.

It localises to the mitochondrion inner membrane. Functionally, component of the INA complex (INAC) that promotes the biogenesis of mitochondrial F(1)F(0)-ATP synthase. INAC facilitates the assembly of the peripheral stalk and promotes the assembly of the catalytic F(1)-domain with the membrane-embedded F(0)-domain. The sequence is that of Inner membrane assembly complex subunit 22 from Saccharomyces cerevisiae (strain ATCC 204508 / S288c) (Baker's yeast).